An 82-amino-acid chain; its full sequence is Penaeidin-3d (82 aa).

The signal sequence occupies residues 1–19 (MRLVVCLVFLASFALVCQG). Gln20 is subject to Pyrrolidone carboxylic acid. 3 cysteine pairs are disulfide-bonded: Cys51/Cys66, Cys55/Cys73, and Cys67/Cys74. Residue Ser81 is modified to Serine amide.

This sequence belongs to the penaeidin family.

It is found in the cytoplasmic granule. Antibacterial and antifungal activity. Presents chitin-binding activity. The protein is Penaeidin-3d of Penaeus vannamei (Whiteleg shrimp).